The primary structure comprises 285 residues: CCR4-NOT transcription complex subunit 7 (285 aa).

A divalent metal cation is bound by residues aspartate 40, glutamate 42, aspartate 161, aspartate 230, and glutamate 278.

This sequence belongs to the CAF1 family. As to quaternary structure, component of the CCR4-NOT complex; distinct complexes seem to exist that differ in the participation of probably mutually exclusive catalytic subunits; the complex contains two deadenylase subunits, CNOT6 or CNOT6L, and CNOT7 or CNOT8. In the complex, interacts directly with CNOT1. Interacts with AGO2. Interacts with TOB1; recruited by TOB1 to a ternary complex with CPEB3 which is required for mRNA deadenylation and decay. Interacts with BTG1. Interacts with BTG2. Interacts with NANOS2. Interacts with ZFP36, ZFP36L1 and ZFP36L2; these interactions are inhibited in response to phorbol 12-myristate 13-acetate (PMA) treatment in a p38 MAPK-dependent manner. Interacts with BTG4. Interacts with EIF4E; this interaction is increased by CNOT7 interaction with BTG4. Requires Mn(2+) as cofactor. It depends on Mg(2+) as a cofactor. Co(2+) serves as cofactor.

It is found in the nucleus. The protein resides in the cytoplasm. The protein localises to the P-body. Its subcellular location is the cytoplasmic ribonucleoprotein granule. The catalysed reaction is Exonucleolytic cleavage of poly(A) to 5'-AMP.. Its function is as follows. Has 3'-5' poly(A) exoribonuclease activity for synthetic poly(A) RNA substrate. Its function seems to be partially redundant with that of CNOT8. Catalytic component of the CCR4-NOT complex which is one of the major cellular mRNA deadenylases and is linked to various cellular processes including bulk mRNA degradation, miRNA-mediated repression, translational repression during translational initiation and general transcription regulation. During miRNA-mediated repression the complex also seems to act as translational repressor during translational initiation. Additional complex functions may be a consequence of its influence on mRNA expression. Required for miRNA-mediated mRNA deadenylation. Associates with members of the BTG family such as TOB1 and BTG2 and is required for their anti-proliferative activity. This Bos taurus (Bovine) protein is CCR4-NOT transcription complex subunit 7 (CNOT7).